A 131-amino-acid chain; its full sequence is Small ribosomal subunit protein bS6 (131 aa).

The tract at residues 97–131 is disordered; that stretch reads TEASPMVKAKDERRRDVAEDLDEEEVDDVAEDSEE. Basic and acidic residues predominate over residues 104-114; the sequence is KAKDERRRDVA. Over residues 115-131 the composition is skewed to acidic residues; that stretch reads EDLDEEEVDDVAEDSEE.

This sequence belongs to the bacterial ribosomal protein bS6 family.

Functionally, binds together with bS18 to 16S ribosomal RNA. This chain is Small ribosomal subunit protein bS6, found in Proteus mirabilis (strain HI4320).